The chain runs to 71 residues: Protein KleB (71 aa).

The segment at residues 9–28 (IETCCRRCGKSIRTLSHTII) is a DNA-binding region (H-T-H motif).

This Escherichia coli protein is Protein KleB (kleB).